Consider the following 418-residue polypeptide: MTLLALGINHKTAPVSLRERVSFSPDKLDQALDSLLAQPMVQGGVVLSTCNRTELYLSVEERDDLQEALIRWLCDYHNLNEDDLRNSLYWHQDNDAVSHLMRVASGLDSLVLGEPQILGQVKKAFADSQKGHMKASELERMFQKSFSVAKRVRTETDIGASAVSVAFAACTLARQIFESLSTVTVLLVGAGETIELVARHLREHKVQKMIIANRTRERAQILADEVGAEVIALSDIDERLREADIIISSTASPLPIIGKGMVERALKSRRNQPMLLVDIAVPRDVEPEVGKLANAYLYSVDDLQSIISHNLAQRKAAAVEAETIVAQEASEFMAWLRAQSASETIRDYRSQAEHVRDELTAKALAALEQGGDAQAIMQDLAWKLTNRLIHAPTKSLQQAARDGDNERLNILRDSLGLE.

Residues 49–52 (TCNR), Ser109, 114–116 (EPQ), and Gln120 contribute to the substrate site. The active-site Nucleophile is the Cys50. 189 to 194 (GAGETI) contributes to the NADP(+) binding site.

This sequence belongs to the glutamyl-tRNA reductase family. Homodimer.

It carries out the reaction (S)-4-amino-5-oxopentanoate + tRNA(Glu) + NADP(+) = L-glutamyl-tRNA(Glu) + NADPH + H(+). It participates in porphyrin-containing compound metabolism; protoporphyrin-IX biosynthesis; 5-aminolevulinate from L-glutamyl-tRNA(Glu): step 1/2. Its function is as follows. Catalyzes the NADPH-dependent reduction of glutamyl-tRNA(Glu) to glutamate 1-semialdehyde (GSA). The sequence is that of Glutamyl-tRNA reductase from Escherichia coli O127:H6 (strain E2348/69 / EPEC).